A 206-amino-acid chain; its full sequence is Probable GTP-binding protein EngB (206 aa).

The region spanning 24-198 is the EngB-type G domain; the sequence is QGREVAFAGR…HARLDEWLGL (175 aa). Residues 32–39, 59–63, 77–80, 144–147, and 177–179 contribute to the GTP site; these read GRSNVGKS, GRTQL, DLPG, TKAD, and FSA. Mg(2+)-binding residues include Ser-39 and Thr-61.

The protein belongs to the TRAFAC class TrmE-Era-EngA-EngB-Septin-like GTPase superfamily. EngB GTPase family. Mg(2+) is required as a cofactor.

In terms of biological role, necessary for normal cell division and for the maintenance of normal septation. This Alkalilimnicola ehrlichii (strain ATCC BAA-1101 / DSM 17681 / MLHE-1) protein is Probable GTP-binding protein EngB.